The primary structure comprises 226 residues: ATP synthase F(0) complex subunit a (226 aa).

6 consecutive transmembrane segments (helical) span residues 5-25 (LFAP…LIII), 68-88 (WSLM…LGML), 97-117 (QLSM…ATGF), 136-156 (FLIP…PVAL), 179-199 (LVLM…LALL), and 201-221 (ILEF…VSLY).

The protein belongs to the ATPase A chain family. In terms of assembly, component of the ATP synthase complex composed at least of ATP5F1A/subunit alpha, ATP5F1B/subunit beta, ATP5MC1/subunit c (homooctomer), MT-ATP6/subunit a, MT-ATP8/subunit 8, ATP5ME/subunit e, ATP5MF/subunit f, ATP5MG/subunit g, ATP5MK/subunit k, ATP5MJ/subunit j, ATP5F1C/subunit gamma, ATP5F1D/subunit delta, ATP5F1E/subunit epsilon, ATP5PF/subunit F6, ATP5PB/subunit b, ATP5PD/subunit d, ATP5PO/subunit OSCP. ATP synthase complex consists of a soluble F(1) head domain (subunits alpha(3) and beta(3)) - the catalytic core - and a membrane F(0) domain - the membrane proton channel (subunits c, a, 8, e, f, g, k and j). These two domains are linked by a central stalk (subunits gamma, delta, and epsilon) rotating inside the F1 region and a stationary peripheral stalk (subunits F6, b, d, and OSCP). Interacts with DNAJC30; interaction is direct.

The protein resides in the mitochondrion inner membrane. It catalyses the reaction H(+)(in) = H(+)(out). Subunit a, of the mitochondrial membrane ATP synthase complex (F(1)F(0) ATP synthase or Complex V) that produces ATP from ADP in the presence of a proton gradient across the membrane which is generated by electron transport complexes of the respiratory chain. ATP synthase complex consist of a soluble F(1) head domain - the catalytic core - and a membrane F(1) domain - the membrane proton channel. These two domains are linked by a central stalk rotating inside the F(1) region and a stationary peripheral stalk. During catalysis, ATP synthesis in the catalytic domain of F(1) is coupled via a rotary mechanism of the central stalk subunits to proton translocation. With the subunit c (ATP5MC1), forms the proton-conducting channel in the F(0) domain, that contains two crucial half-channels (inlet and outlet) that facilitate proton movement from the mitochondrial intermembrane space (IMS) into the matrix. Protons are taken up via the inlet half-channel and released through the outlet half-channel, following a Grotthuss mechanism. The protein is ATP synthase F(0) complex subunit a of Balaenoptera musculus (Blue whale).